The following is a 169-amino-acid chain: Transcription antitermination protein NusB (169 aa).

Belongs to the NusB family.

Involved in transcription antitermination. Required for transcription of ribosomal RNA (rRNA) genes. Binds specifically to the boxA antiterminator sequence of the ribosomal RNA (rrn) operons. The sequence is that of Transcription antitermination protein NusB from Rhodococcus opacus (strain B4).